The chain runs to 320 residues: Cytochrome f (320 aa).

An N-terminal signal peptide occupies residues 1–35 (MQTRNTFSWIKEEITRSISVSLMIYIITGASISNA). The heme site is built by Y36, C56, C59, and H60. The helical transmembrane segment at 286-306 (VQGLLFFLASIVFAQIFLVLK) threads the bilayer.

Belongs to the cytochrome f family. As to quaternary structure, the 4 large subunits of the cytochrome b6-f complex are cytochrome b6, subunit IV (17 kDa polypeptide, petD), cytochrome f and the Rieske protein, while the 4 small subunits are PetG, PetL, PetM and PetN. The complex functions as a dimer. The cofactor is heme.

The protein localises to the plastid. It localises to the chloroplast thylakoid membrane. Component of the cytochrome b6-f complex, which mediates electron transfer between photosystem II (PSII) and photosystem I (PSI), cyclic electron flow around PSI, and state transitions. The sequence is that of Cytochrome f from Gossypium hirsutum (Upland cotton).